A 317-amino-acid chain; its full sequence is Protoheme IX farnesyltransferase (317 aa).

Helical transmembrane passes span 39–59, 60–80, 109–129, 131–151, 160–180, 184–204, 249–269, and 297–317; these read VLYL…GGIN, PILG…AGAI, GALA…WLAT, LLAA…YTMW, IVIG…AATG, LLPV…FWAL, VLHL…LAFV, and FKFS…DHLV.

Belongs to the UbiA prenyltransferase family. Protoheme IX farnesyltransferase subfamily.

Its subcellular location is the cell inner membrane. The enzyme catalyses heme b + (2E,6E)-farnesyl diphosphate + H2O = Fe(II)-heme o + diphosphate. It participates in porphyrin-containing compound metabolism; heme O biosynthesis; heme O from protoheme: step 1/1. Converts heme B (protoheme IX) to heme O by substitution of the vinyl group on carbon 2 of heme B porphyrin ring with a hydroxyethyl farnesyl side group. The chain is Protoheme IX farnesyltransferase from Acidiphilium cryptum (strain JF-5).